The sequence spans 431 residues: Serine--tRNA ligase (431 aa).

238-240 (TAE) serves as a coordination point for L-serine. Residue 269–271 (RSE) coordinates ATP. Glu-292 contributes to the L-serine binding site. 356-359 (EISS) is a binding site for ATP. Residue Ser-391 coordinates L-serine.

The protein belongs to the class-II aminoacyl-tRNA synthetase family. Type-1 seryl-tRNA synthetase subfamily. Homodimer. The tRNA molecule binds across the dimer.

The protein resides in the cytoplasm. The catalysed reaction is tRNA(Ser) + L-serine + ATP = L-seryl-tRNA(Ser) + AMP + diphosphate + H(+). It carries out the reaction tRNA(Sec) + L-serine + ATP = L-seryl-tRNA(Sec) + AMP + diphosphate + H(+). Its pathway is aminoacyl-tRNA biosynthesis; selenocysteinyl-tRNA(Sec) biosynthesis; L-seryl-tRNA(Sec) from L-serine and tRNA(Sec): step 1/1. Its function is as follows. Catalyzes the attachment of serine to tRNA(Ser). Is also able to aminoacylate tRNA(Sec) with serine, to form the misacylated tRNA L-seryl-tRNA(Sec), which will be further converted into selenocysteinyl-tRNA(Sec). The chain is Serine--tRNA ligase from Bdellovibrio bacteriovorus (strain ATCC 15356 / DSM 50701 / NCIMB 9529 / HD100).